A 542-amino-acid chain; its full sequence is MTKFVFVTGGVVSSLGKGIAAASLGAILESRGIKVTMLKLDPYINVDPGTMSPFQHGEVFVTDDGAETDLDLGHYERFISARMGKRNNFTTGQIYETVIKKERRGEYLGKTVQVIPHITDEIKAHVKRGAEGADVAIVEVGGTVGDIESLPFLEAIRQMGIEEGRSNTCFMHLTLLPWIPTAGELKTKPTQHSVKELREIGIQPDILLCRADRAIPEDEKRKIALFTNVPHEAVISVVDADSIYSIPRMLHDQMLDEIVCHKLNLLARAADLSSWNRIVHALKNPKHEVNVAFVGKYVDLTESYKSLTEALIHAGIHNESKVNIHYIDSEEVEKHGTGELEKMDAILVPGGFGKRGTEGKIAAIRYARESKTPYLGICLGMQLAVIEFARNVAGLKDANSTEFDPHTPHPLVGLITEWKNADGKVEQRSEDSDLGGTMRLGAQKCPIVPDTKAFTIYGAEVNERHRHRYEVNNHYVDKLEKAGLVVSARTPTEQLCEMVELPSEVHPWFVACQFHPEFTSNPRTGHPLFNAYIAAALANRKA.

The interval M1 to L265 is amidoligase domain. Position 13 (S13) interacts with CTP. UTP is bound at residue S13. Residues S14 to I19 and D71 each bind ATP. Mg(2+) is bound by residues D71 and E139. Residues D146 to E148, K186 to Q191, and K222 each bind CTP. UTP contacts are provided by residues K186–Q191 and K222. The 253-residue stretch at N290–A542 folds into the Glutamine amidotransferase type-1 domain. G351 provides a ligand contact to L-glutamine. Catalysis depends on C378, which acts as the Nucleophile; for glutamine hydrolysis. Residues L379–Q382, E402, and R468 contribute to the L-glutamine site. Active-site residues include H515 and E517.

It belongs to the CTP synthase family. In terms of assembly, homotetramer.

It carries out the reaction UTP + L-glutamine + ATP + H2O = CTP + L-glutamate + ADP + phosphate + 2 H(+). The catalysed reaction is L-glutamine + H2O = L-glutamate + NH4(+). The enzyme catalyses UTP + NH4(+) + ATP = CTP + ADP + phosphate + 2 H(+). Its pathway is pyrimidine metabolism; CTP biosynthesis via de novo pathway; CTP from UDP: step 2/2. With respect to regulation, allosterically activated by GTP, when glutamine is the substrate; GTP has no effect on the reaction when ammonia is the substrate. The allosteric effector GTP functions by stabilizing the protein conformation that binds the tetrahedral intermediate(s) formed during glutamine hydrolysis. Inhibited by the product CTP, via allosteric rather than competitive inhibition. Catalyzes the ATP-dependent amination of UTP to CTP with either L-glutamine or ammonia as the source of nitrogen. Regulates intracellular CTP levels through interactions with the four ribonucleotide triphosphates. The chain is CTP synthase from Methylobacillus flagellatus (strain ATCC 51484 / DSM 6875 / VKM B-1610 / KT).